A 177-amino-acid chain; its full sequence is Co-chaperone protein HscB homolog (177 aa).

In terms of domain architecture, J spans 8–80 (DYFSLFGMPR…LSRAQYLLEL (73 aa)).

The protein belongs to the HscB family. As to quaternary structure, interacts with HscA and stimulates its ATPase activity.

Functionally, co-chaperone involved in the maturation of iron-sulfur cluster-containing proteins. Seems to help targeting proteins to be folded toward HscA. This is Co-chaperone protein HscB homolog from Azoarcus sp. (strain BH72).